Reading from the N-terminus, the 543-residue chain is Biotinidase (543 aa).

A signal peptide spans M1 to G41. Residues N72–T351 enclose the CN hydrolase domain. E112 acts as the Proton acceptor in catalysis. N119 carries N-linked (GlcNAc...) asparagine glycosylation. N150 carries N-linked (GlcNAc...) (complex) asparagine glycosylation. N-linked (GlcNAc...) asparagine glycosylation is present at N203. K212 serves as the catalytic Proton donor. C245 acts as the Nucleophile in catalysis. 3 N-linked (GlcNAc...) asparagine glycosylation sites follow: N349, N402, and N489.

This sequence belongs to the carbon-nitrogen hydrolase superfamily. BTD/VNN family.

The protein resides in the secreted. The protein localises to the extracellular space. It catalyses the reaction biocytin + H2O = biotin + L-lysine. The catalysed reaction is biotin amide + H2O = biotin + NH4(+). Functionally, catalytic release of biotin from biocytin, the product of biotin-dependent carboxylases degradation. This Homo sapiens (Human) protein is Biotinidase.